Here is a 258-residue protein sequence, read N- to C-terminus: Elongation factor Ts (258 aa).

The tract at residues 81–84 (TDFV) is involved in Mg(2+) ion dislocation from EF-Tu. Residues 216–258 (GLKPAEAPKVEETPPAPPEEPAPEPAPAAESKPAKKGSAKKKK) form a disordered region. Over residues 229 to 241 (PPAPPEEPAPEPA) the composition is skewed to pro residues. Residues 249–258 (AKKGSAKKKK) show a composition bias toward basic residues.

Belongs to the EF-Ts family.

Its subcellular location is the cytoplasm. Its function is as follows. Associates with the EF-Tu.GDP complex and induces the exchange of GDP to GTP. It remains bound to the aminoacyl-tRNA.EF-Tu.GTP complex up to the GTP hydrolysis stage on the ribosome. The protein is Elongation factor Ts of Synechococcus sp. (strain JA-2-3B'a(2-13)) (Cyanobacteria bacterium Yellowstone B-Prime).